The sequence spans 359 residues: NADH-quinone oxidoreductase subunit H (359 aa).

The next 8 membrane-spanning stretches (helical) occupy residues 16–36 (IWPA…AVLA), 94–114 (GLFI…WAVI), 128–148 (GLLF…IAGW), 167–187 (VSYE…SGSL), 205–225 (GLTF…VYFI), 261–281 (FFLA…LLFL), 296–316 (IPGW…FLWV), and 331–351 (LGWK…GAWM).

This sequence belongs to the complex I subunit 1 family. In terms of assembly, NDH-1 is composed of 14 different subunits. Subunits NuoA, H, J, K, L, M, N constitute the membrane sector of the complex.

The protein localises to the cell inner membrane. It catalyses the reaction a quinone + NADH + 5 H(+)(in) = a quinol + NAD(+) + 4 H(+)(out). Its function is as follows. NDH-1 shuttles electrons from NADH, via FMN and iron-sulfur (Fe-S) centers, to quinones in the respiratory chain. The immediate electron acceptor for the enzyme in this species is believed to be ubiquinone. Couples the redox reaction to proton translocation (for every two electrons transferred, four hydrogen ions are translocated across the cytoplasmic membrane), and thus conserves the redox energy in a proton gradient. This subunit may bind ubiquinone. The polypeptide is NADH-quinone oxidoreductase subunit H (Polaromonas naphthalenivorans (strain CJ2)).